A 188-amino-acid chain; its full sequence is Ribosome maturation factor RimM (188 aa).

A PRC barrel domain is found at 93–175 (QDEFYFTDLI…EIEVQGDLSD (83 aa)).

It belongs to the RimM family. As to quaternary structure, binds ribosomal protein uS19.

It is found in the cytoplasm. Its function is as follows. An accessory protein needed during the final step in the assembly of 30S ribosomal subunit, possibly for assembly of the head region. Essential for efficient processing of 16S rRNA. May be needed both before and after RbfA during the maturation of 16S rRNA. It has affinity for free ribosomal 30S subunits but not for 70S ribosomes. In Gluconacetobacter diazotrophicus (strain ATCC 49037 / DSM 5601 / CCUG 37298 / CIP 103539 / LMG 7603 / PAl5), this protein is Ribosome maturation factor RimM.